The sequence spans 265 residues: NAD-capped RNA hydrolase NudC (265 aa).

Residue R76 coordinates substrate. Zn(2+) is bound by residues C106, C109, C124, and C127. Position 132 (Y132) interacts with substrate. The Nudix hydrolase domain occupies 133–256 (PRISPAMMVL…SIAHRLIRHA (124 aa)). 3 residues coordinate a divalent metal cation: A166, E182, and E186. Residues 167 to 188 (GFVEPGETLEECVHRETWEEVG) carry the Nudix box motif. A substrate-binding site is contributed by 200 to 207 (QSWPFPHS). E227 is an a divalent metal cation binding site. Position 249 (A249) interacts with substrate.

It belongs to the Nudix hydrolase family. NudC subfamily. In terms of assembly, homodimer. Mg(2+) is required as a cofactor. Mn(2+) serves as cofactor. It depends on Zn(2+) as a cofactor.

It carries out the reaction a 5'-end NAD(+)-phospho-ribonucleoside in mRNA + H2O = a 5'-end phospho-adenosine-phospho-ribonucleoside in mRNA + beta-nicotinamide D-ribonucleotide + 2 H(+). It catalyses the reaction NAD(+) + H2O = beta-nicotinamide D-ribonucleotide + AMP + 2 H(+). The enzyme catalyses NADH + H2O = reduced beta-nicotinamide D-ribonucleotide + AMP + 2 H(+). Its function is as follows. mRNA decapping enzyme that specifically removes the nicotinamide adenine dinucleotide (NAD) cap from a subset of mRNAs by hydrolyzing the diphosphate linkage to produce nicotinamide mononucleotide (NMN) and 5' monophosphate mRNA. The NAD-cap is present at the 5'-end of some mRNAs and stabilizes RNA against 5'-processing. Has preference for mRNAs with a 5'-end purine. Catalyzes the hydrolysis of a broad range of dinucleotide pyrophosphates. This Chromobacterium violaceum (strain ATCC 12472 / DSM 30191 / JCM 1249 / CCUG 213 / NBRC 12614 / NCIMB 9131 / NCTC 9757 / MK) protein is NAD-capped RNA hydrolase NudC.